Here is a 317-residue protein sequence, read N- to C-terminus: Beta-sarcoglycan (317 aa).

The disordered stretch occupies residues 1–31 (MAAAAAATEQQSSNGPVKKSMREKAVERRNV). Residues 1–64 (MAAAAAATEQ…GLRGRKGNLA (64 aa)) lie on the Cytoplasmic side of the membrane. A compositionally biased stretch (basic and acidic residues) spans 20–31 (SMREKAVERRNV). Residues 65-85 (ICVIVLLFILAVINLIITLVI) form a helical; Signal-anchor for type II membrane protein membrane-spanning segment. Topologically, residues 86 to 317 (WAVIRIGPNG…TSDNPCGDLY (232 aa)) are extracellular. N-linked (GlcNAc...) asparagine glycosylation is found at Asn157, Asn210, and Asn257. 2 cysteine pairs are disulfide-bonded: Cys287–Cys313 and Cys289–Cys306.

The protein belongs to the sarcoglycan beta/delta/gamma/zeta family. In terms of assembly, cross-link to form 2 major subcomplexes: one consisting of SGCB, SGCD and SGCG and the other consisting of SGCB and SGCD. The association between SGCB and SGCG is particularly strong while SGCA is loosely associated with the other sarcoglycans. Disulfide bonds are present.

Its subcellular location is the cell membrane. It localises to the sarcolemma. It is found in the cytoplasm. The protein resides in the cytoskeleton. Its function is as follows. Component of the sarcoglycan complex, a subcomplex of the dystrophin-glycoprotein complex which forms a link between the F-actin cytoskeleton and the extracellular matrix. The sequence is that of Beta-sarcoglycan (SGCB) from Bos taurus (Bovine).